We begin with the raw amino-acid sequence, 230 residues long: GTP cyclohydrolase III (230 aa).

Belongs to the archaeal-type GTP cyclohydrolase family.

It catalyses the reaction GTP + 3 H2O = 2-amino-5-formylamino-6-(5-phospho-D-ribosylamino)pyrimidin-4(3H)-one + 2 phosphate + 2 H(+). Its function is as follows. Catalyzes the formation of 2-amino-5-formylamino-6-ribofuranosylamino-4(3H)-pyrimidinone ribonucleotide monophosphate and inorganic phosphate from GTP. Also has an independent pyrophosphate phosphohydrolase activity. In Saccharolobus islandicus (strain M.14.25 / Kamchatka #1) (Sulfolobus islandicus), this protein is GTP cyclohydrolase III.